A 348-amino-acid polypeptide reads, in one-letter code: F-box protein At2g20380 (348 aa).

In terms of domain architecture, F-box spans 14 to 60 (SPESNSLPNDLIVTILARLSQSYYPKLSLVSKTFRAILASPELYQTR).

The chain is F-box protein At2g20380 from Arabidopsis thaliana (Mouse-ear cress).